Reading from the N-terminus, the 166-residue chain is Protein SprT (166 aa).

Positions 19-164 (RDALARANLK…CVRCGDTLVA (146 aa)) constitute a SprT-like domain. Residue histidine 78 participates in Zn(2+) binding. Glutamate 79 is an active-site residue. Zn(2+) is bound at residue histidine 82.

This sequence belongs to the SprT family. It depends on Zn(2+) as a cofactor.

The protein localises to the cytoplasm. This chain is Protein SprT, found in Cronobacter sakazakii (strain ATCC BAA-894) (Enterobacter sakazakii).